The following is a 367-amino-acid chain: MMETLSQRLSVCQDKILEHYETDSTCLSDHIQYWKLIRLECAVFYKAREMGIKTLNHQVVPTQAISKAKAMQAIELQLMLETLNTTEYSTETWTLQETSIELYTTVPQGCFKKHGVTVEVQFDGDKQNTMHYTNWTHIYILEDSICTVVKGLVNYKGIYYVHQGVETYYVTFREEAKKYGKKNIWEVHVGGQVIVCPESVFSSTELSTAEIATQLHAYNTTETHTKACSVGTTETQKTNHKRLRGGTELPYNPTKRVRLSAVDSVDRGVYSTSDCTNKDRCGSCSTTTPIVHLKGDANTLKCLRYRLGKYKALYQDASSTWRWTCTNDKKQIAIVTLTYTTEYQRDKFLTTVKIPNTVTVSKGYMSI.

The segment at 1–201 (MMETLSQRLS…QVIVCPESVF (201 aa)) is transactivation domain. Positions 287 to 367 (TTPIVHLKGD…VTVSKGYMSI (81 aa)) are DNA-binding domain. Lysine 294 is covalently cross-linked (Glycyl lysine isopeptide (Lys-Gly) (interchain with G-Cter in SUMO)).

The protein belongs to the papillomaviridae E2 protein family. As to quaternary structure, binds DNA as homodimer. Interacts with protein E1; this interaction greatly increases E1 DNA-binding activity. Interacts with protein L1; this interaction enhances E2-dependent replication and transcription activation. Interacts with protein L2; this interaction inhibits E2 transcriptional activity but not DNA replication function E2. Interacts with protein E7; this interaction inhibits E7 oncogenic activity. Interacts with host TAF1; this interaction modulates E2-dependent transcriptional regulation. Interacts with host BRD4; this interaction mediates E2 transcriptional activation function. Additionally, the interaction with host BRD4 on mitotic chromosomes mediates tethering of the viral genome. Interacts with host TOPBP1; this interaction is required for optimal viral DNA replication. Phosphorylated. In terms of processing, sumoylation plays a regulatory role in E2 transcriptional activity.

It localises to the host nucleus. Functionally, plays a role in the initiation of viral DNA replication. A dimer of E2 interacts with a dimer of E1 in order to improve specificity of E1 DNA binding activity. Once the complex recognizes and binds DNA at specific sites, the E2 dimer is removed from DNA. E2 also regulates viral transcription through binding to the E2RE response element (5'-ACCNNNNNNGGT-3') present in multiple copies in the regulatory regions of the viral genome. Activates or represses transcription depending on E2RE's position with regards to proximal promoter elements including the TATA-box. Repression occurs by sterically hindering the assembly of the transcription initiation complex. This is Regulatory protein E2 from Homo sapiens (Human).